Reading from the N-terminus, the 67-residue chain is Beta-mammal toxin CeII9 (67 aa).

In terms of domain architecture, LCN-type CS-alpha/beta spans 1–66 (KEGYLVNHST…VWPLPKKTCN (66 aa)). 4 disulfide bridges follow: Cys12-Cys65, Cys16-Cys41, Cys25-Cys46, and Cys29-Cys48.

Belongs to the long (4 C-C) scorpion toxin superfamily. Sodium channel inhibitor family. Beta subfamily. Expressed by the venom gland.

Its subcellular location is the secreted. Beta toxins bind at site-4 of sodium channels and shift the voltage of activation toward more negative potentials thereby affecting sodium channel activation and promoting spontaneous and repetitive firing. This toxin is active against mammals and lethal to mice. Selectively modulates Nav1.4/SCN4A, a sodium channel present in both denervated and innervated skeletal muscle. This Centruroides elegans (Bark scorpion) protein is Beta-mammal toxin CeII9.